Here is a 340-residue protein sequence, read N- to C-terminus: Adenosine deaminase-like protein (340 aa).

Positions 14 and 16 each coordinate Zn(2+). N(6)-methyl-AMP-binding positions include histidine 16, asparagine 18, histidine 68, 100-103 (TTPK), and glycine 173. Histidine 200 provides a ligand contact to Zn(2+). Residues glutamate 203, aspartate 278, and aspartate 279 each contribute to the N(6)-methyl-AMP site. Glutamate 203 (proton donor) is an active-site residue. Aspartate 278 is a Zn(2+) binding site.

This sequence belongs to the metallo-dependent hydrolases superfamily. Adenosine and AMP deaminases family. Monomer. Requires Zn(2+) as cofactor.

It carries out the reaction N(6)-methyl-AMP + H2O + H(+) = IMP + methylamine. Catalyzes the hydrolysis of the free cytosolic methylated adenosine nucleotide N(6)-methyl-AMP (N6-mAMP) to produce inositol monophosphate (IMP) and methylamine. Is required for the catabolism of cytosolic N6-mAMP, which is derived from the degradation of mRNA containing N6-methylated adenine (m6A). This chain is Adenosine deaminase-like protein, found in Drosophila pseudoobscura pseudoobscura (Fruit fly).